A 256-amino-acid polypeptide reads, in one-letter code: MRLNNKVALITGAARGIGLGFAQAFAAEGAKVIIADIDIARATTSAAAIGPAAKAVKLDVTDLAQIDAVVKAVDEEFGGIDILVNNAAIFDMAPINGITEESYERVFDINLKGPMFMMKAVSNVMIARARGGKIINMASQAGRRGEALVTLYCASKAAIISATQSAALALVKHGINVNAIAPGVVDGEHWEVVDAHFAKWEGLKPGEKKAAVAKSVPIGRFATPDDIKGLAVFLASADSDYILAQTYNVDGGNWMS.

Residues 15-17 (RGI), aspartate 36, 59-60 (DV), asparagine 86, tyrosine 152, and lysine 156 contribute to the NAD(+) site. Tyrosine 152 acts as the Proton acceptor in catalysis.

Belongs to the short-chain dehydrogenases/reductases (SDR) family.

It carries out the reaction galactitol + NAD(+) = keto-D-tagatose + NADH + H(+). The catalysed reaction is keto-D-fructose + NADH + H(+) = D-sorbitol + NAD(+). It functions in the pathway carbohydrate metabolism. Involved in galactitol catabolism. Catalyzes the oxidation of galactitol to D-tagatose. Can also catalyze the oxidation of D-sorbitol to D-fructose. The polypeptide is Galactitol 2-dehydrogenase (Agrobacterium fabrum (strain C58 / ATCC 33970) (Agrobacterium tumefaciens (strain C58))).